The chain runs to 450 residues: Phosphomethylpyrimidine synthase (450 aa).

Residues Asn80, Met109, Tyr138, His173, 193–195 (SRG), 234–237 (DSLR), and Glu273 each bind substrate. His277 contacts Zn(2+). Tyr300 serves as a coordination point for substrate. His341 is a Zn(2+) binding site. [4Fe-4S] cluster is bound by residues Cys421, Cys424, and Cys429.

It belongs to the ThiC family. In terms of assembly, homodimer. The cofactor is [4Fe-4S] cluster.

The catalysed reaction is 5-amino-1-(5-phospho-beta-D-ribosyl)imidazole + S-adenosyl-L-methionine = 4-amino-2-methyl-5-(phosphooxymethyl)pyrimidine + CO + 5'-deoxyadenosine + formate + L-methionine + 3 H(+). The protein operates within cofactor biosynthesis; thiamine diphosphate biosynthesis. Functionally, catalyzes the synthesis of the hydroxymethylpyrimidine phosphate (HMP-P) moiety of thiamine from aminoimidazole ribotide (AIR) in a radical S-adenosyl-L-methionine (SAM)-dependent reaction. This chain is Phosphomethylpyrimidine synthase, found in Campylobacter fetus subsp. fetus (strain 82-40).